The chain runs to 255 residues: Eukaryotic translation initiation factor 3 subunit J (255 aa).

2 stretches are compositionally biased toward acidic residues: residues 1–16 and 34–53; these read MAEN…EAED and EGED…EEAQ. A disordered region spans residues 1–107; the sequence is MAENDSWDAD…SSNLPEITPE (107 aa). Positions 54 to 95 are enriched in basic and acidic residues; sequence DATKQEPQKTELKVPEKKKLQEKIKEKENLQKKRKEELKKQA. Residues 69 to 131 adopt a coiled-coil conformation; the sequence is EKKKLQEKIK…DSDLELAKEA (63 aa).

This sequence belongs to the eIF-3 subunit J family. As to quaternary structure, component of the eukaryotic translation initiation factor 3 (eIF-3) complex, which is composed of 13 subunits: eif3a, eif3b, eif3c, eif3d, eif3e, eif3f, eif3g, eif3h, eif3i, eif3j, eif3k, eif3l and eif3m.

Its subcellular location is the cytoplasm. Its function is as follows. Component of the eukaryotic translation initiation factor 3 (eIF-3) complex, which is involved in protein synthesis of a specialized repertoire of mRNAs and, together with other initiation factors, stimulates binding of mRNA and methionyl-tRNAi to the 40S ribosome. The eIF-3 complex specifically targets and initiates translation of a subset of mRNAs involved in cell proliferation. This chain is Eukaryotic translation initiation factor 3 subunit J (eif3j), found in Xenopus laevis (African clawed frog).